Consider the following 197-residue polypeptide: Phosphoheptose isomerase (197 aa).

In terms of domain architecture, SIS spans 36–197; sequence LVHSLAQGGK…VDSLLLGVEE (162 aa). 51–53 is a binding site for substrate; sequence NGG. Zn(2+)-binding residues include H60 and E64. Substrate-binding positions include E64, 93–94, 119–121, S124, and Q174; these read ND and STS. Zn(2+)-binding residues include Q174 and H182.

The protein belongs to the SIS family. GmhA subfamily. In terms of assembly, homotetramer. The cofactor is Zn(2+).

The protein resides in the cytoplasm. The catalysed reaction is 2 D-sedoheptulose 7-phosphate = D-glycero-alpha-D-manno-heptose 7-phosphate + D-glycero-beta-D-manno-heptose 7-phosphate. Its pathway is carbohydrate biosynthesis; D-glycero-D-manno-heptose 7-phosphate biosynthesis; D-glycero-alpha-D-manno-heptose 7-phosphate and D-glycero-beta-D-manno-heptose 7-phosphate from sedoheptulose 7-phosphate: step 1/1. In terms of biological role, catalyzes the isomerization of sedoheptulose 7-phosphate in D-glycero-D-manno-heptose 7-phosphate. This chain is Phosphoheptose isomerase, found in Thiobacillus denitrificans (strain ATCC 25259 / T1).